The primary structure comprises 68 residues: Acylphosphatase (68 aa).

The Acylphosphatase-like domain maps to 3–68; sequence RIACTVHGRV…RCTAGLPSAP (66 aa). Residues Arg18 and Asn36 contribute to the active site.

The protein belongs to the acylphosphatase family.

The enzyme catalyses an acyl phosphate + H2O = a carboxylate + phosphate + H(+). The sequence is that of Acylphosphatase (acyP) from Oleidesulfovibrio alaskensis (strain ATCC BAA-1058 / DSM 17464 / G20) (Desulfovibrio alaskensis).